Reading from the N-terminus, the 236-residue chain is 2-C-methyl-D-erythritol 4-phosphate cytidylyltransferase (236 aa).

Belongs to the IspD/TarI cytidylyltransferase family. IspD subfamily. In terms of assembly, homodimer.

The catalysed reaction is 2-C-methyl-D-erythritol 4-phosphate + CTP + H(+) = 4-CDP-2-C-methyl-D-erythritol + diphosphate. It participates in isoprenoid biosynthesis; isopentenyl diphosphate biosynthesis via DXP pathway; isopentenyl diphosphate from 1-deoxy-D-xylulose 5-phosphate: step 2/6. Its function is as follows. Catalyzes the formation of 4-diphosphocytidyl-2-C-methyl-D-erythritol from CTP and 2-C-methyl-D-erythritol 4-phosphate (MEP). In Buchnera aphidicola subsp. Schizaphis graminum (strain Sg), this protein is 2-C-methyl-D-erythritol 4-phosphate cytidylyltransferase.